Here is a 499-residue protein sequence, read N- to C-terminus: MKIKFFIKRTLIFIFILVTFLTYIHGYNEPWYKNAIFYEVFVRSFADSDGDRVGDLNGLIDKLDYFKNLNITALWLMPIFPSVSYHGYDVTDYYDIHPGYGTMEDFENLIRKAHEKNIKIILDLVVNHTSSRHPWFVSSASSYNSPYRDYYIWSTEKPEKNSNLWYKKPTGYYYALFWSEMPDLNFDNPKVREEVKKIAKFWIEKGVDGFRLDAAKHIYDDDSKNIQWWKEFYSYLKSIKPDVYLVGEVWDNEYKIAEYYKGLPSNFNFPLSDKIMNSVANQKDLGIIEFLEFERELFGENNTDFADAIFLRNHDQVRVRTFFGGSIDKSILAGSIYLTLPGIPFIYYGEEIGMEGSKPDEYIREPFKWTDDMKSKYQTYWIIPRYNLPGNGIALDTEEKDPNSIYNHYKKLLEIRVKCRALSNGKIERIKTQDRSILAYKLELEDEKIMVVHNLNRIENTFNFNNEIKEKDILYIRNAKTEKNKIILGPYSTVIVKIP.

The Ca(2+) site is built by asparagine 127 and aspartate 183. The Nucleophile role is filled by aspartate 213. Histidine 217 lines the Ca(2+) pocket. The Proton donor role is filled by glutamate 248.

It belongs to the glycosyl hydrolase 13 family. Monomer. The cofactor is Ca(2+).

Its subcellular location is the cytoplasm. The catalysed reaction is Endohydrolysis of (1-&gt;4)-alpha-D-glucosidic linkages in polysaccharides containing three or more (1-&gt;4)-alpha-linked D-glucose units.. This Dictyoglomus thermophilum (strain ATCC 35947 / DSM 3960 / H-6-12) protein is Alpha-amylase 3 (amyC).